Consider the following 118-residue polypeptide: Ribonuclease P protein component 2 (118 aa).

Belongs to the eukaryotic/archaeal RNase P protein component 2 family. In terms of assembly, consists of a catalytic RNA component and at least 4-5 protein subunits.

It localises to the cytoplasm. The enzyme catalyses Endonucleolytic cleavage of RNA, removing 5'-extranucleotides from tRNA precursor.. Its function is as follows. Part of ribonuclease P, a protein complex that generates mature tRNA molecules by cleaving their 5'-ends. The sequence is that of Ribonuclease P protein component 2 from Pyrococcus abyssi (strain GE5 / Orsay).